Consider the following 550-residue polypeptide: Arginine--tRNA ligase (550 aa).

The short motif at 130-140 (ANPTGPIHLGG) is the 'HIGH' region element.

It belongs to the class-I aminoacyl-tRNA synthetase family. As to quaternary structure, monomer.

It localises to the cytoplasm. The catalysed reaction is tRNA(Arg) + L-arginine + ATP = L-arginyl-tRNA(Arg) + AMP + diphosphate. This Rhodococcus opacus (strain B4) protein is Arginine--tRNA ligase.